We begin with the raw amino-acid sequence, 235 residues long: MAKDTTGRMRVTVKSAGRMKLSSKLWLERQLNDPYVAQAKRDGYRSRAAYKLLEIDDKYHFLKSGLAVADLGAAPGGWSQIAAKRVGAPDGRGKVIAIDLLEMGEIPGVTFAQLDFLDDAAPDRLREMLGGGADVVMSDMAANTTGHRKTDQLRIVGLVESAAQFASEVLKPGGTFVAKVFQSGADATLMTQLKRDFATVKHVKPAASRKDSSERYVLAMGFRGVPIVAPETVDE.

Residues Gly76, Trp78, Asp99, Asp115, and Asp139 each coordinate S-adenosyl-L-methionine. Catalysis depends on Lys179, which acts as the Proton acceptor.

It belongs to the class I-like SAM-binding methyltransferase superfamily. RNA methyltransferase RlmE family.

The protein resides in the cytoplasm. The enzyme catalyses uridine(2552) in 23S rRNA + S-adenosyl-L-methionine = 2'-O-methyluridine(2552) in 23S rRNA + S-adenosyl-L-homocysteine + H(+). Functionally, specifically methylates the uridine in position 2552 of 23S rRNA at the 2'-O position of the ribose in the fully assembled 50S ribosomal subunit. The sequence is that of Ribosomal RNA large subunit methyltransferase E from Rhodopseudomonas palustris (strain BisB5).